Here is a 413-residue protein sequence, read N- to C-terminus: MRALHKRVSWPPDFKLCQVRLFISEDSPSQVGSESQDHLQAKSPLASHPSDDNLPPGFGGPFSANESQIKLSDIPLIKWKCSVQILLDREWKVVAGDESKEVEAQNERELRVLEAFYPGASSIPPNPSVPADVEDSHHDDQQTIVIPILPVEDDDIAMDSASDFPTQSGVDVGTEPSITDENTSTSSTLPAGPDIMAALSAISNSKEQGSMIDQDLLIKILSNPKLVENLVANRGSAGSVSSNTSSLYSSSTHEANGVVTTAPISSNGQFYAQPPITHIPPMAYTPHAPQDQPNYGAPPARDASYYKNLIQQHGGDRQETPPVQHLGYRYNLQPGGGPNPEMVNSSNNNQRPRDSKPKIMKACMYFNSARGCRHGANCMYQHDATPYQPRNLNNGNINTSDMQNAKRMRFDRD.

Disordered stretches follow at residues 28-61 (PSQVGSESQDHLQAKSPLASHPSDDNLPPGFGGP), 159-191 (DSASDFPTQSGVDVGTEPSITDENTSTSSTLPA), and 333-356 (QPGGGPNPEMVNSSNNNQRPRDSK). The span at 176-189 (PSITDENTSTSSTL) shows a compositional bias: polar residues. The C3H1-type zinc-finger motif lies at 357 to 385 (PKIMKACMYFNSARGCRHGANCMYQHDAT). A compositionally biased stretch (polar residues) spans 389–403 (PRNLNNGNINTSDMQ). The segment at 389–413 (PRNLNNGNINTSDMQNAKRMRFDRD) is disordered.

The protein is Zinc finger CCCH domain-containing protein 6 of Arabidopsis thaliana (Mouse-ear cress).